We begin with the raw amino-acid sequence, 249 residues long: MRKKIVVGNWKMNKTVTESLVLAAEVTAALGEGFTGCDVGIAPPFTALYEVGKLTGSRLALVAQNCHFEPDGAFTGEVSASMVREAGCSAVIAGHSERRHCFGETNAIVNRKVKHALSEGLQVIMCAGETLEQREGGVTGDVVTAQVREGLLGIDDISNIVIAYEPVWAIGTGKTATSEQAEEVHLLIRNTVSDLFGEEAAGRLRIQYGGSVKPSNAKELFSMPNIDGGLIGGASLNAADFVAIVKAAV.

Residue 9–11 (NWK) coordinates substrate. Catalysis depends on His-95, which acts as the Electrophile. The active-site Proton acceptor is the Glu-165. Substrate-binding positions include Gly-171, Ser-211, and 232-233 (GG).

Belongs to the triosephosphate isomerase family. In terms of assembly, homodimer.

Its subcellular location is the cytoplasm. It catalyses the reaction D-glyceraldehyde 3-phosphate = dihydroxyacetone phosphate. Its pathway is carbohydrate biosynthesis; gluconeogenesis. It functions in the pathway carbohydrate degradation; glycolysis; D-glyceraldehyde 3-phosphate from glycerone phosphate: step 1/1. Functionally, involved in the gluconeogenesis. Catalyzes stereospecifically the conversion of dihydroxyacetone phosphate (DHAP) to D-glyceraldehyde-3-phosphate (G3P). This Chlorobium phaeobacteroides (strain DSM 266 / SMG 266 / 2430) protein is Triosephosphate isomerase.